Reading from the N-terminus, the 293-residue chain is 4-hydroxy-tetrahydrodipicolinate synthase (293 aa).

Thr-47 provides a ligand contact to pyruvate. Tyr-136 acts as the Proton donor/acceptor in catalysis. Lys-164 functions as the Schiff-base intermediate with substrate in the catalytic mechanism. Ile-206 contributes to the pyruvate binding site.

The protein belongs to the DapA family. In terms of assembly, homotetramer; dimer of dimers.

Its subcellular location is the cytoplasm. The enzyme catalyses L-aspartate 4-semialdehyde + pyruvate = (2S,4S)-4-hydroxy-2,3,4,5-tetrahydrodipicolinate + H2O + H(+). Its pathway is amino-acid biosynthesis; L-lysine biosynthesis via DAP pathway; (S)-tetrahydrodipicolinate from L-aspartate: step 3/4. Its function is as follows. Catalyzes the condensation of (S)-aspartate-beta-semialdehyde [(S)-ASA] and pyruvate to 4-hydroxy-tetrahydrodipicolinate (HTPA). The chain is 4-hydroxy-tetrahydrodipicolinate synthase from Listeria innocua serovar 6a (strain ATCC BAA-680 / CLIP 11262).